A 179-amino-acid polypeptide reads, in one-letter code: Large ribosomal subunit protein uL6 (179 aa).

This sequence belongs to the universal ribosomal protein uL6 family. As to quaternary structure, part of the 50S ribosomal subunit.

Functionally, this protein binds to the 23S rRNA, and is important in its secondary structure. It is located near the subunit interface in the base of the L7/L12 stalk, and near the tRNA binding site of the peptidyltransferase center. The polypeptide is Large ribosomal subunit protein uL6 (Koribacter versatilis (strain Ellin345)).